The following is a 114-amino-acid chain: uncharacterized protein (114 aa).

To M.kandleri MK0008.

This is an uncharacterized protein from Methanocaldococcus jannaschii (strain ATCC 43067 / DSM 2661 / JAL-1 / JCM 10045 / NBRC 100440) (Methanococcus jannaschii).